A 295-amino-acid chain; its full sequence is Ankyrin repeat and SOCS box protein 17 (295 aa).

One copy of the ANK repeat lies at 146-176 (SGITPLLYVAQTRQSNILKILLQYGILEREK). The 64-residue stretch at 232-295 (LGRRPIISNW…RLQKYLNLES (64 aa)) folds into the SOCS box domain.

This sequence belongs to the ankyrin SOCS box (ASB) family.

It participates in protein modification; protein ubiquitination. Functionally, may be a substrate-recognition component of a SCF-like ECS (Elongin-Cullin-SOCS-box protein) E3 ubiquitin-protein ligase complex which mediates the ubiquitination and subsequent proteasomal degradation of target proteins. This is Ankyrin repeat and SOCS box protein 17 (ASB17) from Canis lupus familiaris (Dog).